Reading from the N-terminus, the 257-residue chain is MTEQRMALVASPTTAAQEAATELRAIYEWHPIERADLVVALGGDGFMLRTLHAMLDRHRILPVFGMNLGTVGFLMNDWKPDLLELRLQQARAITVLPLRMDVETVEGQRHSVPAINEVSLLRETRETAKIEVLVDGRVVLPELVCDGVLVSTPAGSTAYNLSAQGPILPLESSLLALTPISPFRPRRWRGAILPNKNAISFRVLDAIKRPVSAVADQREVRDVSLIRVGIDKTSPLTLLFDPEHALDDRITMEQFAV.

The Proton acceptor role is filled by Asp-44. Residues 44-45 (DG), Arg-49, 116-117 (NE), Asp-146, Ala-154, and 157-162 (TAYNLS) each bind NAD(+).

This sequence belongs to the NAD kinase family. A divalent metal cation is required as a cofactor.

It is found in the cytoplasm. It catalyses the reaction NAD(+) + ATP = ADP + NADP(+) + H(+). Functionally, involved in the regulation of the intracellular balance of NAD and NADP, and is a key enzyme in the biosynthesis of NADP. Catalyzes specifically the phosphorylation on 2'-hydroxyl of the adenosine moiety of NAD to yield NADP. This is NAD kinase from Rhizorhabdus wittichii (strain DSM 6014 / CCUG 31198 / JCM 15750 / NBRC 105917 / EY 4224 / RW1) (Sphingomonas wittichii).